A 152-amino-acid chain; its full sequence is Small ribosomal subunit protein uS15 (152 aa).

Positions 1 to 10 (MARMYARRRG) are enriched in basic residues. The segment at 1 to 24 (MARMYARRRGTSSSVRPYRKEAPE) is disordered.

Belongs to the universal ribosomal protein uS15 family. Part of the 30S ribosomal subunit.

The protein is Small ribosomal subunit protein uS15 of Methanoculleus marisnigri (strain ATCC 35101 / DSM 1498 / JR1).